The following is a 121-amino-acid chain: Large ribosomal subunit protein uL18 (121 aa).

It belongs to the universal ribosomal protein uL18 family. In terms of assembly, part of the 50S ribosomal subunit; part of the 5S rRNA/L5/L18/L25 subcomplex. Contacts the 5S and 23S rRNAs.

Functionally, this is one of the proteins that bind and probably mediate the attachment of the 5S RNA into the large ribosomal subunit, where it forms part of the central protuberance. This is Large ribosomal subunit protein uL18 from Ureaplasma urealyticum serovar 10 (strain ATCC 33699 / Western).